We begin with the raw amino-acid sequence, 299 residues long: Ethylmalonyl-CoA decarboxylase (299 aa).

This sequence belongs to the enoyl-CoA hydratase/isomerase family.

The protein resides in the cytoplasm. Its subcellular location is the cytosol. It catalyses the reaction (2S)-ethylmalonyl-CoA + H(+) = butanoyl-CoA + CO2. It carries out the reaction (S)-methylmalonyl-CoA + H(+) = propanoyl-CoA + CO2. The catalysed reaction is (2R)-ethylmalonyl-CoA + H(+) = butanoyl-CoA + CO2. Functionally, decarboxylates ethylmalonyl-CoA, a potentially toxic metabolite, to form butyryl-CoA, suggesting it might be involved in metabolite proofreading. Acts preferentially on (S)-ethylmalonyl-CoA but also has some activity on the (R)-isomer. Also has methylmalonyl-CoA decarboxylase activity at lower level. The polypeptide is Ethylmalonyl-CoA decarboxylase (echdc1) (Xenopus laevis (African clawed frog)).